The following is a 211-amino-acid chain: UPF0637 protein BLi01683/BL05149 (211 aa).

The protein belongs to the UPF0637 family.

The sequence is that of UPF0637 protein BLi01683/BL05149 from Bacillus licheniformis (strain ATCC 14580 / DSM 13 / JCM 2505 / CCUG 7422 / NBRC 12200 / NCIMB 9375 / NCTC 10341 / NRRL NRS-1264 / Gibson 46).